A 503-amino-acid polypeptide reads, in one-letter code: 2-(3-amino-3-carboxypropyl)histidine synthase subunit 2 (503 aa).

Residues Cys-93, Cys-114, and Cys-334 each coordinate [4Fe-4S] cluster. A disordered region spans residues 464–503 (GLDSVDEGEGPSKLYEGQSGIAKGYVGEGSKEKIQRDFGK). Basic and acidic residues predominate over residues 492 to 503 (GSKEKIQRDFGK).

The protein belongs to the DPH1/DPH2 family. DPH2 subfamily. As to quaternary structure, component of the 2-(3-amino-3-carboxypropyl)histidine synthase complex composed of dph1, dph2, dph3 and a NADH-dependent reductase, predominantly cbr1. [4Fe-4S] cluster is required as a cofactor.

The protein resides in the cytoplasm. Its pathway is protein modification; peptidyl-diphthamide biosynthesis. Functionally, required for the first step of diphthamide biosynthesis, a post-translational modification of histidine which occurs in elongation factor 2. Dph1 and dph2 transfer a 3-amino-3-carboxypropyl (ACP) group from S-adenosyl-L-methionine (SAM) to a histidine residue, the reaction is assisted by a reduction system comprising dph3 and a NADH-dependent reductase, predominantly cbr1. Facilitates the reduction of the catalytic iron-sulfur cluster found in the dph1 subunit. This is 2-(3-amino-3-carboxypropyl)histidine synthase subunit 2 from Schizosaccharomyces pombe (strain 972 / ATCC 24843) (Fission yeast).